We begin with the raw amino-acid sequence, 564 residues long: Mitochondrial distribution and morphology protein 34-1 (564 aa).

An SMP-LTD domain is found at 1–195 (MAFKFNWSPL…LPAIIHRLSL (195 aa)). Composition is skewed to polar residues over residues 297-322 (PDQN…SQTG) and 329-352 (DNAS…SSYG). Disordered regions lie at residues 297-408 (PDQN…VTSA), 414-433 (HEQP…DQSL), and 452-473 (DLSS…PFNT). Residues 359-371 (RHSRAHARRRKKR) show a composition bias toward basic residues. The segment covering 383-394 (SDSASVSVSDES) has biased composition (low complexity). Positions 396-408 (YTESASAPSVTSA) are enriched in polar residues. Basic and acidic residues predominate over residues 452 to 466 (DLSSEIVRDRAEPSE).

The protein belongs to the MDM34 family. In terms of assembly, component of the ER-mitochondria encounter structure (ERMES) or MDM complex, composed of mmm1, mdm10, mdm12 and mdm34.

The protein resides in the mitochondrion outer membrane. Functionally, component of the ERMES/MDM complex, which serves as a molecular tether to connect the endoplasmic reticulum (ER) and mitochondria. Components of this complex are involved in the control of mitochondrial shape and protein biogenesis, and function in nonvesicular lipid trafficking between the ER and mitochondria. Mdm34 is required for the interaction of the ER-resident membrane protein mmm1 and the outer mitochondrial membrane-resident beta-barrel protein mdm10. This Penicillium rubens (strain ATCC 28089 / DSM 1075 / NRRL 1951 / Wisconsin 54-1255) (Penicillium chrysogenum) protein is Mitochondrial distribution and morphology protein 34-1.